The primary structure comprises 1392 residues: Leucine-rich PPR motif-containing protein, mitochondrial (1392 aa).

A mitochondrion-targeting transit peptide spans M1–R77. PPR repeat units lie at residues L125 to Y159, D160 to P194, N195 to I229, T230 to P264, G265 to F299, M300 to I334, H402 to I436, R437 to P471, V677 to M708, V709 to L745, D746 to A783, A784 to S820, S821 to R856, and R953 to P987. Residues K151 and K186 each carry the N6-acetyllysine modification. Position 291 is an N6-acetyllysine (K291). K462 is subject to N6-acetyllysine. K749 is subject to N6-acetyllysine. 3 positions are modified to phosphoserine: S1025, S1026, and S1028. PPR repeat units lie at residues G1030 to F1064, S1065 to L1101, N1102 to P1136, S1137 to S1173, R1174 to T1208, and N1315 to L1349. S1137 carries the post-translational modification Phosphoserine.

As to quaternary structure, component of mRNP complexes associated with HNRPA1. Component of the complex, at least composed of LRPPRC, BECN1 and BCL2; the interactions prevent BECN1 from forming an autophagy-inducing complex with PIK3C3. Interacts with CECR2, HEBP2, MAP1S, UXT, PPARGC1A and FOXO1. Interacts (via N-terminus) with EIF4E; the interaction promotes association of EIF4E with 4ESE-containing mRNAs. Interacts with exportin XPO1/CRM1; interacts both alone and in complex with EIF4E and 4ESE-containing mRNAs to form an EIF4E-dependent mRNA export complex. Interacts with importin IPO8; the interaction occurs when LRPPRC is in its RNA-free form and returns LRPPRC to the nucleus for further export rounds. Interacts with BECN1. In terms of tissue distribution, widely expressed. Expressed in liver, brain and a subset of small diameter sensory neurons in the dorsal root ganglion (at protein level).

Its subcellular location is the mitochondrion. It localises to the nucleus. The protein localises to the nucleoplasm. It is found in the nucleus inner membrane. The protein resides in the nucleus outer membrane. May play a role in RNA metabolism in both nuclei and mitochondria. In the nucleus binds to HNRPA1-associated poly(A) mRNAs and is part of nmRNP complexes at late stages of mRNA maturation which are possibly associated with nuclear mRNA export. Positively modulates nuclear export of mRNAs containing the EIF4E sensitivity element (4ESE) by binding simultaneously to both EIF4E and the 4ESE and acting as a platform for assembly for the RNA export complex. Also binds to exportin XPO1/CRM1 to engage the nuclear pore and traffic the bound mRNAs to the cytoplasm. May bind mature mRNA in the nucleus outer membrane. In mitochondria binds to poly(A) mRNA. Plays a role in translation or stability of mitochondrially encoded cytochrome c oxidase (COX) subunits. May be involved in transcription regulation. Cooperates with PPARGC1A to regulate certain mitochondrially encoded genes and gluconeogenic genes and may regulate docking of PPARGC1A to transcription factors. Seems to be involved in the transcription regulation of the multidrug-related genes MDR1 and MVP. Part of a nuclear factor that binds to the invMED1 element of MDR1 and MVP gene promoters. Binds single-stranded DNA. Required for maintaining mitochondrial potential. Suppresses the initiation of basal levels of autophagy and mitophagy by sustaining BCL2 levels. In Rattus norvegicus (Rat), this protein is Leucine-rich PPR motif-containing protein, mitochondrial (Lrpprc).